The primary structure comprises 215 residues: Adenylate kinase (215 aa).

10–15 is an ATP binding site; the sequence is GTGKGT. Residues 30-59 form an NMP region; sequence STGDMLRESVVLKNKIGMIIKNIIEEGKLV. AMP contacts are provided by residues Thr31, Arg36, 57–59, 85–88, and Gln92; these read KLV and GFPR. An LID region spans residues 122 to 159; sequence GRRIHIQSGRIYHVKFKPPKIKDKDDLTGQTLITRKDD. ATP is bound by residues Arg123 and 132 to 133; that span reads IY. AMP contacts are provided by Arg156 and Arg167. Leu200 is an ATP binding site.

Belongs to the adenylate kinase family. As to quaternary structure, monomer.

Its subcellular location is the cytoplasm. The enzyme catalyses AMP + ATP = 2 ADP. Its pathway is purine metabolism; AMP biosynthesis via salvage pathway; AMP from ADP: step 1/1. Its function is as follows. Catalyzes the reversible transfer of the terminal phosphate group between ATP and AMP. Plays an important role in cellular energy homeostasis and in adenine nucleotide metabolism. In Buchnera aphidicola subsp. Acyrthosiphon pisum (strain 5A), this protein is Adenylate kinase.